Consider the following 338-residue polypeptide: Protein FosB (338 aa).

2 disordered regions span residues 1–54 (MFQA…PGSF) and 80–162 (AQSQ…RVRR). Residues 13-31 (SRCSSSPSAESQYLSSVDS) are compositionally biased toward polar residues. Serine 27 is modified (phosphoserine). A compositionally biased stretch (gly residues) spans 113–124 (SSGGASGSGGPS). Over residues 125 to 137 (TSGTTSGPGPARP) the composition is skewed to low complexity. A bZIP domain is found at 155-218 (EEKRRVRRER…ERLEFVLVAH (64 aa)). A basic motif region spans residues 157–182 (KRRVRRERNKLAAAKCRNRRRELTDR). Positions 183–211 (LQAETDQLEEEKAELESEIAELQKEKERL) are leucine-zipper. Disordered regions lie at residues 222-271 (CKIP…TSQD) and 315-338 (AGTQ…LLAL). Pro residues predominate over residues 256 to 265 (LPPPPAPPLP). A compositionally biased stretch (polar residues) spans 318–338 (QRPSGSDQPTDPLNSPSLLAL).

This sequence belongs to the bZIP family. Fos subfamily. In terms of assembly, heterodimer; binds to DNA as heterodimer. Component of an AP-1 transcription factor complex; composed of FOS-JUN heterodimers. As part of the AP-1 transcription factor complex, forms heterodimers with JUN, JUNB or JUND, thereby binding to the AP-1 consensus sequence and stimulating transcription. Interacts with the BAF multiprotein chromatin-remodeling complex subunits SMARCB1 and SMARCD1. Interacts with ARID1A and JUN. In terms of processing, phosphorylated.

It localises to the nucleus. Functionally, heterodimerizes with proteins of the JUN family to form an AP-1 transcription factor complex, thereby enhancing their DNA binding activity to an AP-1 consensus sequence 5'-TGA[GC]TCA-3' and enhancing their transcriptional activity. Exhibits transactivation activity in vitro. As part of the AP-1 complex, facilitates enhancer selection together with cell-type-specific transcription factors by collaboratively binding to nucleosomal enhancers and recruiting the SWI/SNF (BAF) chromatin remodeling complex to establish accessible chromatin. Together with JUN, plays a role in activation-induced cell death of T cells by binding to the AP-1 promoter site of FASLG/CD95L, and inducing its transcription in response to activation of the TCR/CD3 signaling pathway. Involved in the display of nurturing behavior towards newborns. May play a role in neurogenesis in the hippocampus and in learning and memory-related tasks by regulating the expression of various genes involved in neurogenesis, depression and epilepsy. Implicated in behavioral responses related to morphine reward and spatial memory. This chain is Protein FosB (FOSB), found in Canis lupus familiaris (Dog).